The primary structure comprises 557 residues: Dihydroxy-acid dehydratase (557 aa).

Residue Asp-78 coordinates Mg(2+). Position 119 (Cys-119) interacts with [2Fe-2S] cluster. Asp-120 and Lys-121 together coordinate Mg(2+). Lys-121 is modified (N6-carboxylysine). Cys-192 lines the [2Fe-2S] cluster pocket. Glu-442 contributes to the Mg(2+) binding site. The active-site Proton acceptor is the Ser-468.

Belongs to the IlvD/Edd family. In terms of assembly, homodimer. It depends on [2Fe-2S] cluster as a cofactor. Mg(2+) serves as cofactor.

It carries out the reaction (2R)-2,3-dihydroxy-3-methylbutanoate = 3-methyl-2-oxobutanoate + H2O. The catalysed reaction is (2R,3R)-2,3-dihydroxy-3-methylpentanoate = (S)-3-methyl-2-oxopentanoate + H2O. It functions in the pathway amino-acid biosynthesis; L-isoleucine biosynthesis; L-isoleucine from 2-oxobutanoate: step 3/4. It participates in amino-acid biosynthesis; L-valine biosynthesis; L-valine from pyruvate: step 3/4. Functions in the biosynthesis of branched-chain amino acids. Catalyzes the dehydration of (2R,3R)-2,3-dihydroxy-3-methylpentanoate (2,3-dihydroxy-3-methylvalerate) into 2-oxo-3-methylpentanoate (2-oxo-3-methylvalerate) and of (2R)-2,3-dihydroxy-3-methylbutanoate (2,3-dihydroxyisovalerate) into 2-oxo-3-methylbutanoate (2-oxoisovalerate), the penultimate precursor to L-isoleucine and L-valine, respectively. The polypeptide is Dihydroxy-acid dehydratase (Bacillus cereus (strain AH187)).